A 430-amino-acid chain; its full sequence is Ribosomal protein uS12 methylthiotransferase RimO (430 aa).

The MTTase N-terminal domain maps to 2 to 119 (ISVYSISLGC…WPEMIGRALG (118 aa)). The [4Fe-4S] cluster site is built by Cys-11, Cys-46, Cys-81, Cys-145, Cys-149, and Cys-152. A Radical SAM core domain is found at 131–361 (STGPSYAYLK…MEVQAEISEE (231 aa)). In terms of domain architecture, TRAM spans 364-430 (EGFTGSDEDV…SRTYDLVALS (67 aa)).

Belongs to the methylthiotransferase family. RimO subfamily. [4Fe-4S] cluster is required as a cofactor.

Its subcellular location is the cytoplasm. The enzyme catalyses L-aspartate(89)-[ribosomal protein uS12]-hydrogen + (sulfur carrier)-SH + AH2 + 2 S-adenosyl-L-methionine = 3-methylsulfanyl-L-aspartate(89)-[ribosomal protein uS12]-hydrogen + (sulfur carrier)-H + 5'-deoxyadenosine + L-methionine + A + S-adenosyl-L-homocysteine + 2 H(+). Catalyzes the methylthiolation of an aspartic acid residue of ribosomal protein uS12. This chain is Ribosomal protein uS12 methylthiotransferase RimO, found in Oleidesulfovibrio alaskensis (strain ATCC BAA-1058 / DSM 17464 / G20) (Desulfovibrio alaskensis).